Here is a 577-residue protein sequence, read N- to C-terminus: Zinc finger protein 384 (577 aa).

The tract at residues 171 to 225 (TLTEEGGGGGGGGGSVAPKPPRGRKKKRMLESGLPEMNDPYVLSPEDDDDHQKDG) is disordered. Residues 175–185 (EGGGGGGGGGS) show a composition bias toward gly residues. Ser214 bears the Phosphoserine mark. 8 consecutive C2H2-type zinc fingers follow at residues 228–250 (YRCRMCSLTFYSKSEMQIHSKSH), 256–278 (HKCPHCSKTFANSSYLAQHIRIH), 284–306 (YSCNFCEKSFRQLSHLQQHTRIH), 317–339 (HKCPHCSKTFANTSYLAQHLRIH), 345–367 (YNCSYCQKAFRQLSHLQQHTRIH), 373–397 (YKCAHPGCEKAFTQLSNLQSHRRQH), 403–425 (FKCHNCHRAYTDAASLEVHLSTH), and 433–455 (YTCTICSRAYTSETYLMKHMRKH). Residues 501–515 (QQQQQQQQQQQQQQQ) are compositionally biased toward low complexity. Positions 501 to 550 (QQQQQQQQQQQQQQQQPPPHFQSPGAAPQGGGGGDSNPNPPPQCSFDLTP) are disordered.

The protein belongs to the krueppel C2H2-type zinc-finger protein family. Interacts with BCAR1.

Its subcellular location is the nucleus. Its function is as follows. Transcription factor that binds the consensus DNA sequence [GC]AAAAA. Seems to bind and regulate the promoters of MMP1, MMP3, MMP7 and COL1A1. The protein is Zinc finger protein 384 (ZNF384) of Homo sapiens (Human).